Consider the following 465-residue polypeptide: Probable Xaa-Pro aminopeptidase pepP (465 aa).

4 residues coordinate Mn(2+): Asp263, Asp274, Glu397, and Glu437.

It belongs to the peptidase M24B family. It depends on Mn(2+) as a cofactor.

The catalysed reaction is Release of any N-terminal amino acid, including proline, that is linked to proline, even from a dipeptide or tripeptide.. In terms of biological role, catalyzes the removal of a penultimate prolyl residue from the N-termini of peptides. This Penicillium rubens (strain ATCC 28089 / DSM 1075 / NRRL 1951 / Wisconsin 54-1255) (Penicillium chrysogenum) protein is Probable Xaa-Pro aminopeptidase pepP (pepP).